The following is a 179-amino-acid chain: Ribosome maturation factor RimM (179 aa).

In terms of domain architecture, PRC barrel spans 100 to 176; the sequence is KEEFHLLELI…FVIINPPNGL (77 aa).

Belongs to the RimM family. In terms of assembly, binds ribosomal protein uS19.

The protein localises to the cytoplasm. Functionally, an accessory protein needed during the final step in the assembly of 30S ribosomal subunit, possibly for assembly of the head region. Essential for efficient processing of 16S rRNA. May be needed both before and after RbfA during the maturation of 16S rRNA. It has affinity for free ribosomal 30S subunits but not for 70S ribosomes. This chain is Ribosome maturation factor RimM, found in Prochlorococcus marinus (strain MIT 9301).